Consider the following 324-residue polypeptide: Zinc transporter ZIP1 (324 aa).

Topologically, residues 1-30 are extracellular; it reads MGPWGEPELLVWRPEAVASEPSVPVGLEVK. A helical membrane pass occupies residues 31–51; it reads LGALVLLLLLTLICSLVPVCV. Topologically, residues 52–68 are cytoplasmic; that stretch reads LRRSGANHEASASGQKA. Residues 69 to 89 traverse the membrane as a helical segment; that stretch reads LSLVSCFAGGVFLATCLLDLL. At 90 to 104 the chain is on the extracellular side; that stretch reads PDYLAAIDEALEALH. The helical transmembrane segment at 105–125 threads the bilayer; it reads VTLQFPLQEFILAMGFFLVLV. Residues 126–179 are Cytoplasmic-facing; that stretch reads MEQITLAYKEQTSPPHPEETRALLGTVNGGPQHWHDGPGIPQAGGTPAAPSALR. Residues 180-200 traverse the membrane as a helical segment; that stretch reads ACVLVFSLALHSVFEGLAVGL. Topologically, residues 201–206 are extracellular; it reads QRDRAR. A helical membrane pass occupies residues 207–227; the sequence is AMELCLALLLHKGILAVSLSL. The Cytoplasmic portion of the chain corresponds to 228–237; it reads RLLQSHLRVQ. Residues 238 to 258 traverse the membrane as a helical segment; it reads VVAGCGILFSCMTPLGIGLGA. Over 259-272 the chain is Extracellular; sequence ALAESAGPLHQLAQ. A helical membrane pass occupies residues 273–293; sequence SVLEGMAAGTFLYITFLEILP. The Cytoplasmic portion of the chain corresponds to 294-303; that stretch reads QELATSEQRI. A helical membrane pass occupies residues 304–324; the sequence is LKVILLLAGFALLTGLLFVQI.

Belongs to the ZIP transporter (TC 2.A.5) family. As to expression, ubiquitous, except in the pancreas. Highest levels seen in kidney, salivary gland and placenta.

It localises to the cell membrane. Its subcellular location is the endoplasmic reticulum membrane. It catalyses the reaction Zn(2+)(in) = Zn(2+)(out). In terms of biological role, transporter for the divalent cation Zn(2+). Mediates the influx of Zn(2+) into cells from extracellular space. The protein is Zinc transporter ZIP1 (Slc39a1) of Mus musculus (Mouse).